A 202-amino-acid chain; its full sequence is 3-isopropylmalate dehydratase small subunit 1 (202 aa).

This sequence belongs to the LeuD family. LeuD type 1 subfamily. As to quaternary structure, heterodimer of LeuC and LeuD.

It carries out the reaction (2R,3S)-3-isopropylmalate = (2S)-2-isopropylmalate. It participates in amino-acid biosynthesis; L-leucine biosynthesis; L-leucine from 3-methyl-2-oxobutanoate: step 2/4. In terms of biological role, catalyzes the isomerization between 2-isopropylmalate and 3-isopropylmalate, via the formation of 2-isopropylmaleate. This chain is 3-isopropylmalate dehydratase small subunit 1, found in Mannheimia succiniciproducens (strain KCTC 0769BP / MBEL55E).